A 190-amino-acid polypeptide reads, in one-letter code: Small ribosomal subunit protein eS7 (190 aa).

Belongs to the eukaryotic ribosomal protein eS7 family.

The polypeptide is Small ribosomal subunit protein eS7 (RPS7) (Avicennia marina (Grey mangrove)).